An 84-amino-acid polypeptide reads, in one-letter code: MTETKKSEELTFEEAMKGLEGIVAKLEEGDVPLEQAINYFQEGMALSKMCHEKLQHVEKQMDFILKDNGELAPFSVQEEDEGDK.

Belongs to the XseB family. In terms of assembly, heterooligomer composed of large and small subunits.

It localises to the cytoplasm. It carries out the reaction Exonucleolytic cleavage in either 5'- to 3'- or 3'- to 5'-direction to yield nucleoside 5'-phosphates.. In terms of biological role, bidirectionally degrades single-stranded DNA into large acid-insoluble oligonucleotides, which are then degraded further into small acid-soluble oligonucleotides. The sequence is that of Exodeoxyribonuclease 7 small subunit from Bacillus velezensis (strain DSM 23117 / BGSC 10A6 / LMG 26770 / FZB42) (Bacillus amyloliquefaciens subsp. plantarum).